Here is a 236-residue protein sequence, read N- to C-terminus: 2,3,4,5-tetrahydropyridine-2,6-dicarboxylate N-acetyltransferase (236 aa).

Belongs to the transferase hexapeptide repeat family. DapH subfamily.

It catalyses the reaction (S)-2,3,4,5-tetrahydrodipicolinate + acetyl-CoA + H2O = L-2-acetamido-6-oxoheptanedioate + CoA. It participates in amino-acid biosynthesis; L-lysine biosynthesis via DAP pathway; LL-2,6-diaminopimelate from (S)-tetrahydrodipicolinate (acetylase route): step 1/3. In terms of biological role, catalyzes the transfer of an acetyl group from acetyl-CoA to tetrahydrodipicolinate. This is 2,3,4,5-tetrahydropyridine-2,6-dicarboxylate N-acetyltransferase from Thermotoga maritima (strain ATCC 43589 / DSM 3109 / JCM 10099 / NBRC 100826 / MSB8).